The primary structure comprises 189 residues: MIVILNNGGQYVHRIQRSLKYLEVPAKIVPNSTTLEEIIADSEIKGIILSGGPDITKATNCENIALNSEIPVLGICLGHQLISKAYGGHVSRADSEEYASITIYVKEENDLFKGVPSKFTAWASHMDEVKVTPGCFEILAYSDICGVESIKHKEKSIYGVQFHPEVSHTEYGDVILKNFCKKCGFEFEE.

Residues 1–189 enclose the Glutamine amidotransferase type-1 domain; it reads MIVILNNGGQ…CKKCGFEFEE (189 aa). Catalysis depends on Cys-76, which acts as the Nucleophile. Catalysis depends on residues His-163 and Glu-165.

In terms of assembly, heterodimer composed of a glutamine amidotransferase subunit (A) and a GMP-binding subunit (B).

It catalyses the reaction XMP + L-glutamine + ATP + H2O = GMP + L-glutamate + AMP + diphosphate + 2 H(+). The protein operates within purine metabolism; GMP biosynthesis; GMP from XMP (L-Gln route): step 1/1. In terms of biological role, catalyzes the synthesis of GMP from XMP. The protein is GMP synthase [glutamine-hydrolyzing] subunit A of Methanococcus maripaludis (strain C6 / ATCC BAA-1332).